The primary structure comprises 281 residues: Bis(5'-nucleosyl)-tetraphosphatase, symmetrical (281 aa).

Belongs to the Ap4A hydrolase family.

It catalyses the reaction P(1),P(4)-bis(5'-adenosyl) tetraphosphate + H2O = 2 ADP + 2 H(+). Hydrolyzes diadenosine 5',5'''-P1,P4-tetraphosphate to yield ADP. The polypeptide is Bis(5'-nucleosyl)-tetraphosphatase, symmetrical (Delftia acidovorans (strain DSM 14801 / SPH-1)).